Here is a 488-residue protein sequence, read N- to C-terminus: Ribulose bisphosphate carboxylase large chain (488 aa).

Residues N127 and T177 each coordinate substrate. K179 acts as the Proton acceptor in catalysis. K181 contributes to the substrate binding site. K205, D207, and E208 together coordinate Mg(2+). At K205 the chain carries N6-carboxylysine. Catalysis depends on H297, which acts as the Proton acceptor. Residues R298, H330, and S382 each coordinate substrate.

Belongs to the RuBisCO large chain family. Type I subfamily. In terms of assembly, heterohexadecamer of 8 large chains and 8 small chains. It depends on Mg(2+) as a cofactor.

The protein localises to the plastid. Its subcellular location is the chloroplast. The catalysed reaction is 2 (2R)-3-phosphoglycerate + 2 H(+) = D-ribulose 1,5-bisphosphate + CO2 + H2O. It catalyses the reaction D-ribulose 1,5-bisphosphate + O2 = 2-phosphoglycolate + (2R)-3-phosphoglycerate + 2 H(+). Its function is as follows. RuBisCO catalyzes two reactions: the carboxylation of D-ribulose 1,5-bisphosphate, the primary event in carbon dioxide fixation, as well as the oxidative fragmentation of the pentose substrate in the photorespiration process. Both reactions occur simultaneously and in competition at the same active site. The chain is Ribulose bisphosphate carboxylase large chain from Guillardia theta (Cryptophyte).